Here is a 635-residue protein sequence, read N- to C-terminus: 1-deoxy-D-xylulose-5-phosphate synthase (635 aa).

Residues histidine 79 and 120–122 (GHS) each bind thiamine diphosphate. Residue aspartate 151 participates in Mg(2+) binding. Residues 152-153 (GA), asparagine 182, tyrosine 290, and glutamate 372 each bind thiamine diphosphate. Asparagine 182 lines the Mg(2+) pocket.

The protein belongs to the transketolase family. DXPS subfamily. Homodimer. It depends on Mg(2+) as a cofactor. The cofactor is thiamine diphosphate.

The catalysed reaction is D-glyceraldehyde 3-phosphate + pyruvate + H(+) = 1-deoxy-D-xylulose 5-phosphate + CO2. It participates in metabolic intermediate biosynthesis; 1-deoxy-D-xylulose 5-phosphate biosynthesis; 1-deoxy-D-xylulose 5-phosphate from D-glyceraldehyde 3-phosphate and pyruvate: step 1/1. Functionally, catalyzes the acyloin condensation reaction between C atoms 2 and 3 of pyruvate and glyceraldehyde 3-phosphate to yield 1-deoxy-D-xylulose-5-phosphate (DXP). The polypeptide is 1-deoxy-D-xylulose-5-phosphate synthase (Stenotrophomonas maltophilia (strain K279a)).